The chain runs to 195 residues: Flavin-dependent monooxygenase, reductase subunit HsaB (195 aa).

FAD contacts are provided by residues 42–46 (PVGFA), 48–49 (QS), 63–65 (CPT), 69–70 (RS), and 95–96 (RF). 160–163 (FYRG) provides a ligand contact to NAD(+).

This sequence belongs to the non-flavoprotein flavin reductase family. In terms of assembly, hsaAB monooxygenase consists of an oxygenase component HsaA and a reductase component HsaB.

The enzyme catalyses a reduced flavin + NAD(+) = an oxidized flavin + NADH + 2 H(+). Its pathway is lipid metabolism; steroid biosynthesis. In terms of biological role, catalyzes the reduction of free flavins (FMN or FAD) by NADH. Subsequently, the reduced flavins diffuse to the HsaA oxygenase subunit. In Rhodococcus jostii (strain RHA1), this protein is Flavin-dependent monooxygenase, reductase subunit HsaB (hsaB).